Reading from the N-terminus, the 342-residue chain is Protein-glutamate methylesterase/protein-glutamine glutaminase 1 (342 aa).

Residues 3-121 (RVLVIDDSLF…NIREIGGELK (119 aa)) enclose the Response regulatory domain. Position 54 is a 4-aspartylphosphate (Asp-54). The region spanning 141–340 (DSNARNVVLI…EKIVETIRAM (200 aa)) is the CheB-type methylesterase domain. Residues Ser-153, His-180, and Asp-282 contribute to the active site.

This sequence belongs to the CheB family. Post-translationally, phosphorylated by CheA. Phosphorylation of the N-terminal regulatory domain activates the methylesterase activity.

Its subcellular location is the cytoplasm. It catalyses the reaction [protein]-L-glutamate 5-O-methyl ester + H2O = L-glutamyl-[protein] + methanol + H(+). It carries out the reaction L-glutaminyl-[protein] + H2O = L-glutamyl-[protein] + NH4(+). In terms of biological role, involved in chemotaxis. Part of a chemotaxis signal transduction system that modulates chemotaxis in response to various stimuli. Catalyzes the demethylation of specific methylglutamate residues introduced into the chemoreceptors (methyl-accepting chemotaxis proteins or MCP) by CheR. Also mediates the irreversible deamidation of specific glutamine residues to glutamic acid. In Methanospirillum hungatei JF-1 (strain ATCC 27890 / DSM 864 / NBRC 100397 / JF-1), this protein is Protein-glutamate methylesterase/protein-glutamine glutaminase 1.